Consider the following 469-residue polypeptide: Glutamate--tRNA ligase 2 (469 aa).

The 'HIGH' region motif lies at 10-20 (PSPTGYLHIGG). Zn(2+)-binding residues include C99, C101, C126, and D128. Residues 237-241 (RLSKR) carry the 'KMSKS' region motif. K240 lines the ATP pocket.

This sequence belongs to the class-I aminoacyl-tRNA synthetase family. Glutamate--tRNA ligase type 1 subfamily. As to quaternary structure, monomer. Requires Zn(2+) as cofactor.

The protein localises to the cytoplasm. It carries out the reaction tRNA(Glu) + L-glutamate + ATP = L-glutamyl-tRNA(Glu) + AMP + diphosphate. Functionally, catalyzes the attachment of glutamate to tRNA(Glu) in a two-step reaction: glutamate is first activated by ATP to form Glu-AMP and then transferred to the acceptor end of tRNA(Glu). In Coxiella burnetii (strain CbuG_Q212) (Coxiella burnetii (strain Q212)), this protein is Glutamate--tRNA ligase 2.